The primary structure comprises 751 residues: MKYCKFCCKAVTGVKLIHVPKCAIKRKLWEQSLGCSLGENSQICDTHFNDSQWKAAPAKGQTFKRRRLNADAVPSKVIEPEPEKIKEGYTSGSTQTESCSLFNENKSLREKIRTLEYEMRRLEQQLRESQQLEESLRKIFTDTQIRILKNGGQRATFNSDDISTAICLHTAGPRAYNHLYKKGFPLPSRTTLYRWLSDVDIKRGCLDVVIDLMDSDGVDDADKLCVLAFDEMKVAAAFEYDSSADIVYEPSDYVQLAIVRGLKKSWKQPVFFDFNTRMDPDTLNNILRKLHRKGYLVVAIVSDLGTGNQKLWTELGISESKTWFSHPADDHLKIFVFSDTPHLIKLVRNHYVDSGLTINGKKLTKKTIQEALHLCNKSDLSILFKINENHINVRSLAKQKVKLATQLFSNTTASSIRRCYSLGYDIENATETADFFKLMNDWFDIFNSKLSTSNCIECSQPYGKQLDIQNDILNRMSEIMRTGILDKPKRLPFQKGIIVNNASLDGLYKYLQENFSMQYILTSRLNQDIVEHFFGSMRSRGGQFDHPTPLQFKYRLRKYIIGMTNLKECVNKNVIPDNSESWLNLDFSSKENENKSKDDEPVDDEPVDEMLSNIDFTEMDELTEDAMEYIAGYVIKKLRISDKVKENLTFTYVDEVSHGGLIKPSEKFQEKLKELECIFLHYTNNNNFEITNNVKEKLILAARNVDVDKQVKSFYFKIRIYFRIKYFNKKIEIKNQKQKLIGNSKLLKIKL.

A THAP-type zinc finger spans residues 1 to 77 (MKYCKFCCKA…LNADAVPSKV (77 aa)).

Its function is as follows. P-element transposase that specifically mediates transposition of P-elements. Mediates both; precise and imprecise excision. The polypeptide is Transposable element P transposase (Drosophila melanogaster (Fruit fly)).